Reading from the N-terminus, the 176-residue chain is ATP-dependent protease subunit HslV (176 aa).

The active site involves Thr-2. Positions 157, 160, and 163 each coordinate Na(+).

This sequence belongs to the peptidase T1B family. HslV subfamily. In terms of assembly, a double ring-shaped homohexamer of HslV is capped on each side by a ring-shaped HslU homohexamer. The assembly of the HslU/HslV complex is dependent on binding of ATP.

It localises to the cytoplasm. It carries out the reaction ATP-dependent cleavage of peptide bonds with broad specificity.. With respect to regulation, allosterically activated by HslU binding. Its function is as follows. Protease subunit of a proteasome-like degradation complex believed to be a general protein degrading machinery. The polypeptide is ATP-dependent protease subunit HslV (Buchnera aphidicola subsp. Schizaphis graminum (strain Sg)).